Consider the following 287-residue polypeptide: Transcription initiation factor IIB 1 (287 aa).

A TFIIB-type zinc finger spans residues 3–31; it reads HPHRCPECDGTIRETDTEHVCADCGLVVT. 4 residues coordinate Zn(2+): Cys-7, Cys-10, Cys-23, and Cys-26. The span at 40 to 53 shows a compositional bias: basic and acidic residues; the sequence is EWRTFSDDPDHAPE. The segment at 40–63 is disordered; it reads EWRTFSDDPDHAPERTGAPLTRSR. 2 consecutive repeat copies span residues 111–194 and 205–286.

It belongs to the TFIIB family.

In terms of biological role, stabilizes TBP binding to an archaeal box-A promoter. Also responsible for recruiting RNA polymerase II to the pre-initiation complex (DNA-TBP-TFIIB). The sequence is that of Transcription initiation factor IIB 1 from Halobacterium salinarum (strain ATCC 700922 / JCM 11081 / NRC-1) (Halobacterium halobium).